We begin with the raw amino-acid sequence, 318 residues long: N-succinylornithine carbamoyltransferase (318 aa).

Residues 47–50 (SLRT), Trp-75, and Arg-110 contribute to the carbamoyl phosphate site. Glu-142 serves as a coordination point for N(2)-succinyl-L-ornithine. 147–150 (HPLQ) contacts carbamoyl phosphate. His-176 and Lys-236 together coordinate N(2)-succinyl-L-ornithine. 274–275 (CL) lines the carbamoyl phosphate pocket. Arg-278 is a binding site for N(2)-succinyl-L-ornithine. Arg-302 serves as a coordination point for carbamoyl phosphate.

Belongs to the aspartate/ornithine carbamoyltransferase superfamily. SOTCase family. In terms of assembly, homotrimer.

The enzyme catalyses N(2)-succinyl-L-ornithine + carbamoyl phosphate = N(2)-succinyl-L-citrulline + phosphate + H(+). It functions in the pathway amino-acid biosynthesis; L-arginine biosynthesis. Its function is as follows. Catalyzes the transfer of the carbamoyl group from carbamoyl phosphate to the delta-amino group of N(2)-succinyl-L-ornithine to produce N(2)-succinyl-L-citrulline. Is essential for arginine biosynthesis. Has no activity with either L-ornithine or L-aspartate as substrate. Also has no detectable AOTCase activity, being unable to convert N(2)-acetyl-L-ornithine to N(2)-acetyl-L-citrulline. In Bacteroides thetaiotaomicron (strain ATCC 29148 / DSM 2079 / JCM 5827 / CCUG 10774 / NCTC 10582 / VPI-5482 / E50), this protein is N-succinylornithine carbamoyltransferase.